A 103-amino-acid polypeptide reads, in one-letter code: Small ribosomal subunit protein uS10 (103 aa).

The protein belongs to the universal ribosomal protein uS10 family. As to quaternary structure, part of the 30S ribosomal subunit.

In terms of biological role, involved in the binding of tRNA to the ribosomes. In Leptothrix cholodnii (strain ATCC 51168 / LMG 8142 / SP-6) (Leptothrix discophora (strain SP-6)), this protein is Small ribosomal subunit protein uS10.